We begin with the raw amino-acid sequence, 267 residues long: Protein BMH1 (267 aa).

S2 is modified (N-acetylserine). Residue K76 forms a Glycyl lysine isopeptide (Lys-Gly) (interchain with G-Cter in ubiquitin) linkage. S89 carries the post-translational modification Phosphoserine. Positions D236 to K267 are disordered. A compositionally biased stretch (low complexity) spans A243–K267.

The protein belongs to the 14-3-3 family. As to quaternary structure, homodimer. Interacts with NTH1 (via N-terminus when phosphorylated by PKA); the interaction is direct and activates NTH1. Interacts with FIN1.

Functionally, involved in growth regulation. In Saccharomyces cerevisiae (strain ATCC 204508 / S288c) (Baker's yeast), this protein is Protein BMH1 (BMH1).